The following is a 276-amino-acid chain: Orotidine 5'-phosphate decarboxylase (276 aa).

Catalysis depends on lysine 96, which acts as the Proton donor.

This sequence belongs to the OMP decarboxylase family. Type 2 subfamily.

It catalyses the reaction orotidine 5'-phosphate + H(+) = UMP + CO2. It participates in pyrimidine metabolism; UMP biosynthesis via de novo pathway; UMP from orotate: step 2/2. The chain is Orotidine 5'-phosphate decarboxylase from Porphyromonas gingivalis (strain ATCC 33277 / DSM 20709 / CIP 103683 / JCM 12257 / NCTC 11834 / 2561).